Here is a 423-residue protein sequence, read N- to C-terminus: UDP-N-acetylglucosamine 1-carboxyvinyltransferase 2 (423 aa).

23 to 24 (KN) serves as a coordination point for phosphoenolpyruvate. R96 contributes to the UDP-N-acetyl-alpha-D-glucosamine binding site. C120 (proton donor) is an active-site residue. 2-(S-cysteinyl)pyruvic acid O-phosphothioketal is present on C120. Residues 125–129 (RPIDL), D309, and V331 contribute to the UDP-N-acetyl-alpha-D-glucosamine site.

The protein belongs to the EPSP synthase family. MurA subfamily.

The protein localises to the cytoplasm. It carries out the reaction phosphoenolpyruvate + UDP-N-acetyl-alpha-D-glucosamine = UDP-N-acetyl-3-O-(1-carboxyvinyl)-alpha-D-glucosamine + phosphate. Its pathway is cell wall biogenesis; peptidoglycan biosynthesis. Cell wall formation. Adds enolpyruvyl to UDP-N-acetylglucosamine. This is UDP-N-acetylglucosamine 1-carboxyvinyltransferase 2 from Streptococcus agalactiae serotype Ia (strain ATCC 27591 / A909 / CDC SS700).